The chain runs to 58 residues: UPF0509 protein YciZ (58 aa).

The protein belongs to the UPF0509 family.

The sequence is that of UPF0509 protein YciZ from Escherichia fergusonii (strain ATCC 35469 / DSM 13698 / CCUG 18766 / IAM 14443 / JCM 21226 / LMG 7866 / NBRC 102419 / NCTC 12128 / CDC 0568-73).